A 129-amino-acid polypeptide reads, in one-letter code: MNLIAILEQEEIGRALGEKTIPEFAPGDTVIVSVNVVEGTRKRVQAYEGVVIAKRNRGLNSSFIVRKISSGEGVERTFQTYSPLLASIVVKRRGDVRRAKLYYLRDRSGKSARIKEKLVAKKDRAAPEA.

Belongs to the bacterial ribosomal protein bL19 family.

Its function is as follows. This protein is located at the 30S-50S ribosomal subunit interface and may play a role in the structure and function of the aminoacyl-tRNA binding site. The sequence is that of Large ribosomal subunit protein bL19 from Paraburkholderia phytofirmans (strain DSM 17436 / LMG 22146 / PsJN) (Burkholderia phytofirmans).